The chain runs to 1659 residues: Cortactin-binding protein 2 (1659 aa).

Residues 1–23 (MATDGASCEPDLSRAPEDAAGAA) are disordered. The stretch at 119 to 276 (RKMQERMSAQ…EQLKRGSDSK (158 aa)) forms a coiled coil. Disordered stretches follow at residues 324–436 (LTMP…LHPG) and 450–474 (GNAN…SPTS). 2 stretches are compositionally biased toward low complexity: residues 337–348 (ASANAKGSAAMA) and 381–392 (GPSTGLTPDPTS). The segment covering 405–418 (TAQTPGITPQNSQA) has biased composition (polar residues). R494 carries the post-translational modification Asymmetric dimethylarginine. Residues 495–612 (FTGPQAGAPP…SSPQLPPKPS (118 aa)) form a disordered region. Positions 579 to 589 (TVASPPSSLPQ) are enriched in polar residues. ANK repeat units lie at residues 705–735 (GRPT…DINY), 739–768 (DGHS…QVNA), 772–801 (NGFT…NINH), 805–834 (GGQT…DRNV), and 838–867 (DGWT…PAHG). Residues 869–893 (SFSEEESESGVFDLDGGGESPEGKS) are disordered. The stretch at 908-938 (EGWTAAHIAASKGFKNCLEILCRHGGLETER) is one ANK 6 repeat. The disordered stretch occupies residues 1443 to 1478 (KKKGESGAWRKVNTSPRRKSGRFSLPTWNKPDLSTE). A Phosphoserine modification is found at S1520. Residues 1613 to 1659 (RSKVTQCSQNTKRNSSSSNTRQIEINNNSKEENWNLHKNEHLEKPNK) form a disordered region. Positions 1620 to 1634 (SQNTKRNSSSSNTRQ) are enriched in low complexity. Positions 1641 to 1659 (SKEENWNLHKNEHLEKPNK) are enriched in basic and acidic residues.

In terms of assembly, interacts with CTTN/cortactin SH3 domain. Interacts with STRN, STRN4/zinedin and MOB4/phocein; this interactions mediate the association with the STRIPAK core complex and may regulate dendritic spine distribution of the STRIPAK complex in hippocampal neurons. Activation of glutamate receptors weakens the interaction with STRN and STRN4.

It localises to the cytoplasm. It is found in the cell cortex. Its subcellular location is the cell projection. The protein resides in the dendritic spine. In terms of biological role, regulates the dendritic spine distribution of CTTN/cortactin in hippocampal neurons, and thus controls dendritic spinogenesis and dendritic spine maintenance. Associates with the striatin-interacting phosphatase and kinase (STRIPAK) core complex to regulate dendritic spine distribution of the STRIPAK complex in hippocampal neurons. This chain is Cortactin-binding protein 2 (CTTNBP2), found in Saimiri boliviensis boliviensis (Bolivian squirrel monkey).